We begin with the raw amino-acid sequence, 311 residues long: Aspartate carbamoyltransferase catalytic subunit (311 aa).

The carbamoyl phosphate site is built by arginine 55 and threonine 56. Lysine 85 provides a ligand contact to L-aspartate. Residues arginine 106, histidine 135, and glutamine 138 each coordinate carbamoyl phosphate. Arginine 168 and arginine 230 together coordinate L-aspartate. Leucine 268 and proline 269 together coordinate carbamoyl phosphate.

It belongs to the aspartate/ornithine carbamoyltransferase superfamily. ATCase family. As to quaternary structure, heterododecamer (2C3:3R2) of six catalytic PyrB chains organized as two trimers (C3), and six regulatory PyrI chains organized as three dimers (R2).

It carries out the reaction carbamoyl phosphate + L-aspartate = N-carbamoyl-L-aspartate + phosphate + H(+). Its pathway is pyrimidine metabolism; UMP biosynthesis via de novo pathway; (S)-dihydroorotate from bicarbonate: step 2/3. In terms of biological role, catalyzes the condensation of carbamoyl phosphate and aspartate to form carbamoyl aspartate and inorganic phosphate, the committed step in the de novo pyrimidine nucleotide biosynthesis pathway. In Salmonella arizonae (strain ATCC BAA-731 / CDC346-86 / RSK2980), this protein is Aspartate carbamoyltransferase catalytic subunit.